A 36-amino-acid polypeptide reads, in one-letter code: Photosystem I reaction center subunit VIII (36 aa).

Residues 9–29 (ILVPLVGLVFPAITMVSLFLY) traverse the membrane as a helical segment.

The protein belongs to the PsaI family.

Its subcellular location is the plastid. The protein localises to the chloroplast thylakoid membrane. In terms of biological role, may help in the organization of the PsaL subunit. The chain is Photosystem I reaction center subunit VIII from Zygnema circumcarinatum (Green alga).